A 548-amino-acid chain; its full sequence is Membrane protein insertase YidC (548 aa).

The helical transmembrane segment at 6-26 (NLLVIALLFVSFMIWQAWEQD) threads the bilayer. Positions 28–56 (NPQPQTQQTTQTTTTAAGSAADQGVPASG) are disordered. Residues 29–42 (PQPQTQQTTQTTTT) show a composition bias toward low complexity. A run of 4 helical transmembrane segments spans residues 350–370 (FVGN…GIMY), 424–444 (FPLI…MGSI), 458–478 (LSAQ…MFFI), and 499–519 (PVIF…YYIV).

It belongs to the OXA1/ALB3/YidC family. Type 1 subfamily. In terms of assembly, interacts with the Sec translocase complex via SecD. Specifically interacts with transmembrane segments of nascent integral membrane proteins during membrane integration.

The protein resides in the cell inner membrane. Required for the insertion and/or proper folding and/or complex formation of integral membrane proteins into the membrane. Involved in integration of membrane proteins that insert both dependently and independently of the Sec translocase complex, as well as at least some lipoproteins. Aids folding of multispanning membrane proteins. The protein is Membrane protein insertase YidC of Salmonella newport (strain SL254).